The sequence spans 392 residues: 1-deoxy-D-xylulose 5-phosphate reductoisomerase (392 aa).

NADPH contacts are provided by Thr10, Gly11, Ser12, Ile13, Asn38, and Asn124. Lys125 provides a ligand contact to 1-deoxy-D-xylulose 5-phosphate. Glu126 lines the NADPH pocket. Asp150 provides a ligand contact to Mn(2+). 1-deoxy-D-xylulose 5-phosphate is bound by residues Ser151, Glu152, Ser176, and His199. Residue Glu152 coordinates Mn(2+). Gly205 is an NADPH binding site. Residues Ser212, Asn217, Lys218, and Glu221 each contribute to the 1-deoxy-D-xylulose 5-phosphate site. Glu221 is a binding site for Mn(2+).

Belongs to the DXR family. Requires Mg(2+) as cofactor. Mn(2+) is required as a cofactor.

It catalyses the reaction 2-C-methyl-D-erythritol 4-phosphate + NADP(+) = 1-deoxy-D-xylulose 5-phosphate + NADPH + H(+). Its pathway is isoprenoid biosynthesis; isopentenyl diphosphate biosynthesis via DXP pathway; isopentenyl diphosphate from 1-deoxy-D-xylulose 5-phosphate: step 1/6. In terms of biological role, catalyzes the NADPH-dependent rearrangement and reduction of 1-deoxy-D-xylulose-5-phosphate (DXP) to 2-C-methyl-D-erythritol 4-phosphate (MEP). This is 1-deoxy-D-xylulose 5-phosphate reductoisomerase from Gloeobacter violaceus (strain ATCC 29082 / PCC 7421).